Consider the following 163-residue polypeptide: uncharacterized protein (163 aa).

This is an uncharacterized protein from Caenorhabditis elegans.